The primary structure comprises 1137 residues: DNA-directed RNA polymerase III subunit RPC2 (1137 aa).

The segment at 1084–1099 adopts a C4-type zinc-finger fold; the sequence is DVCRTCGRMAYCSWCH. Zn(2+) contacts are provided by C1086, C1089, C1098, and C1101.

Belongs to the RNA polymerase beta chain family. In terms of assembly, component of the RNA polymerase III (Pol III) complex consisting of 17 subunits.

The protein resides in the nucleus. The enzyme catalyses RNA(n) + a ribonucleoside 5'-triphosphate = RNA(n+1) + diphosphate. Its function is as follows. DNA-dependent RNA polymerase catalyzes the transcription of DNA into RNA using the four ribonucleoside triphosphates as substrates. Second largest core component of RNA polymerase III which synthesizes small RNAs, such as 5S rRNA and tRNAs. Proposed to contribute to the polymerase catalytic activity and forms the polymerase active center together with the largest subunit. Pol III is composed of mobile elements and Polr3B is part of the core element with the central large cleft and probably a clamp element that moves to open and close the cleft. This is DNA-directed RNA polymerase III subunit RPC2 from Drosophila melanogaster (Fruit fly).